Here is a 198-residue protein sequence, read N- to C-terminus: FMN-dependent NADH:quinone oxidoreductase (198 aa).

FMN-binding positions include M92 to L95 and S136 to G139.

This sequence belongs to the azoreductase type 1 family. In terms of assembly, homodimer. FMN serves as cofactor.

The catalysed reaction is 2 a quinone + NADH + H(+) = 2 a 1,4-benzosemiquinone + NAD(+). The enzyme catalyses N,N-dimethyl-1,4-phenylenediamine + anthranilate + 2 NAD(+) = 2-(4-dimethylaminophenyl)diazenylbenzoate + 2 NADH + 2 H(+). In terms of biological role, quinone reductase that provides resistance to thiol-specific stress caused by electrophilic quinones. Functionally, also exhibits azoreductase activity. Catalyzes the reductive cleavage of the azo bond in aromatic azo compounds to the corresponding amines. This chain is FMN-dependent NADH:quinone oxidoreductase, found in Clostridium perfringens (strain SM101 / Type A).